The following is an 889-amino-acid chain: Extended synaptotagmin-3 (889 aa).

Residues 1–65 (MAQGDPGGQT…GPRDPGQGGA (65 aa)) are disordered. Over 1–66 (MAQGDPGGQT…PRDPGQGGAG (66 aa)) the chain is Cytoplasmic. 2 stretches are compositionally biased toward basic and acidic residues: residues 17 to 28 (TDKKPDEPKATE) and 41 to 58 (PGGEKGLRDPPGGEKGPR). Transmembrane regions (helical) follow at residues 67–91 (EALAEALYGLGRPVLRAVLYLFPVY) and 92–112 (LCGRFGLSPTWLLFGLFLWMF). The Cytoplasmic portion of the chain corresponds to 113 to 889 (WTRNKKFKLA…ELTPTGLPTS (777 aa)). The SMP-LTD domain maps to 155 to 333 (DVERVEWLNK…LPNRFTVPLS (179 aa)). 2 consecutive C2 domains span residues 331–452 (PLSS…DEWF) and 468–618 (WLSL…STIK). Residues Lys363, Asp364, Asp376, Asp423, Glu424, Asp425, Asp427, Asp429, and Asp430 each coordinate Ca(2+). Residues 649 to 724 (SIKRAQSQQH…GAVPESHTPS (76 aa)) are disordered. Basic residues predominate over residues 658–671 (HKSHGKSHQAHHQA). Low complexity-rich tracts occupy residues 672–682 (HQTQQNHTVQQ) and 691–714 (ISTTSQQANTSSSNPAPNQNPNST). The region spanning 757-879 (MTGEVEVSVR…DLVKGFTKWF (123 aa)) is the C2 3 domain. Positions 804-811 (RKWSGRKK) are required for phosphatidylinositol 4,5-bisphosphate-dependent location at the cell membrane.

This sequence belongs to the extended synaptotagmin family.

Its subcellular location is the cell membrane. It localises to the endoplasmic reticulum membrane. In terms of biological role, tethers the endoplasmic reticulum to the cell membrane and promotes the formation of appositions between the endoplasmic reticulum and the cell membrane. Binds glycerophospholipids in a barrel-like domain and may play a role in cellular lipid transport. This Xenopus tropicalis (Western clawed frog) protein is Extended synaptotagmin-3 (esyt3).